Here is a 376-residue protein sequence, read N- to C-terminus: MARGPGPLGRPRPDTVAMPKRGKRLKFRAHDACSGRVTVADYADSDLAVVRSGRVKKAVANAVRQEVKSLCGLEASQVPAEEALSGAGEPYDIIDSSDEMDAQEENIHERTVSRKKKSKRHKEELDGAGGEEYPMDIWLLLASYIRPEDIVNFSLICKNAWTVTCTAAFWTRLYRRHYTLDASLPLRLRPESMEKLHCLRACVIRSLYHMYEPFAARISKNPAIPESTPSTLKNSKCLLFWCRKIVGNRQEPMWEFNFKFKKQSPRLKSKCTGGLQPPVQYEDVHTNPDQDCCLLQVTTLNFIFIPIVMGMIFTLFTINVSTDMRHHRVRLVFQDSPVHGGRKLRSEQGVQVILDPVHSVRLFDWWHPQYPFSLRA.

Disordered regions lie at residues 1–20 (MARG…AMPK) and 102–127 (AQEE…ELDG). The helical transmembrane segment at 300-320 (LNFIFIPIVMGMIFTLFTINV) threads the bilayer.

It belongs to the TMEM183 family. Expressed in brain, lung, pancreas, thymus, intestine and blood. Not detected in heart, placenta, liver, muscle, kidney, spleen, prostate, testis, ovary and colon.

Its subcellular location is the membrane. The protein is Putative transmembrane protein 183BP of Homo sapiens (Human).